The sequence spans 608 residues: Preterminal protein (608 aa).

A Nuclear localization signal motif is present at residues 338–347 (RLPMRRRRRR). The interval 342–377 (RRRRRRAPPPPPMSEELSEPEVEAFPPASPPRRSFE) is disordered. Position 536 is an O-(5'-phospho-DNA)-serine (Ser536).

It belongs to the adenoviridae terminal protein family. In terms of assembly, heterodimer with the polymerase; this heterodimer binds to bp 9 to 18 of the genome. Interacts with host POU2F1; POU2F1 binds to the auxiliary sequences in the inverted terminal repeats and tethers the pTP-POL heterodimer to the origin DNA thereby participating in the assembly of the pre-initiation complex (POL-TP-DBP-NFIA-POU2F1). Preterminal protein is used to replicate viral genome, upon genomic encapsidation it is processed first into iTP and finally into TP by adenovirus protease.

The protein resides in the host nucleus matrix. Protein covalently bound to the viral DNA that acts as a primer for viral genomic replication by DNA strand displacement. Assembles on the viral origin of replication in an initiation complex with viral polymerase, DBP, host NFIA and host POU2F1/OCT1. During initiation, the polymerase covalently couples the first dCTP with Ser-580 of pTP. The terminal protein stimulates the template activity over 20 fold compared to protein-free templates. Neo-synthesized viral genomes are linked to two preterminal proteins, one for each 5' end. These new genomes are encapsidated in the nucleus, and during capsid maturation by viral protease, preterminal protein is first cleaved into intermediary (iTP), then into mature TP. May play a role in host nuclear matrix localization of genomic DNA. This is Preterminal protein from Canine adenovirus serotype 1 (strain CLL) (CAdV-1).